Here is a 697-residue protein sequence, read N- to C-terminus: Putative ATP-dependent RNA helicase an3 (697 aa).

Positions 27-189 (ESGVAGTKGR…PLAPNDRVEQ (163 aa)) are disordered. 3 stretches are compositionally biased toward basic and acidic residues: residues 89-111 (GRSDRGFYDRENSGWNSGRDKDA), 135-144 (RRTDDRRQDG), and 151-170 (RSDKSGFGRFDRGNSRWSDD). Residues 221-249 (ESFHDVTMGEIIMGNIQLTRYTRPTPVQK) carry the Q motif motif. ATP contacts are provided by residues 241-248 (YTRPTPVQ) and 265-272 (AQTGSGKT). Residues 252-444 (IPIIIEKRDL…RDFLDEYIFL (193 aa)) form the Helicase ATP-binding domain. Positions 388-391 (DEAD) match the DEAD box motif. The Helicase C-terminal domain maps to 455-616 (NITQKVVWVE…EVPSWLENMA (162 aa)). The disordered stretch occupies residues 619–666 (QHHKSSSRGRSKSRFSGGFGAKDYRQSSGAGSSFGSSRGGRSSGHGGS). A compositionally biased stretch (basic residues) spans 622–631 (KSSSRGRSKS). Positions 645–654 (SSGAGSSFGS) are enriched in low complexity. The span at 655–666 (SRGGRSSGHGGS) shows a compositional bias: gly residues.

Belongs to the DEAD box helicase family. DDX3/DED1 subfamily.

The protein resides in the cell membrane. It is found in the nucleus. Its subcellular location is the cytoplasm. It localises to the stress granule. The protein localises to the inflammasome. The protein resides in the cell projection. It is found in the lamellipodium. It catalyses the reaction ATP + H2O = ADP + phosphate + H(+). In terms of biological role, multifunctional ATP-dependent RNA helicase. The ATPase activity can be stimulated by various ribo-and deoxynucleic acids indicative for a relaxed substrate specificity. In vitro can unwind partially double-stranded DNA with a preference for 5'-single-stranded DNA overhangs. Involved in many cellular processes, which do not necessarily require its ATPase/helicase catalytic activities. Involved in the regulation of transcription and translation initiation. Involved in innate immunity. Involved in both stress and inflammatory responses. May negatively regulate extrinsic apoptotic signaling pathway via death domain receptors. May be involved in mitotic chromosome segregation. Required for canonical Wnt signaling involved in anteroposterior neural patterning. The chain is Putative ATP-dependent RNA helicase an3 (an3) from Xenopus laevis (African clawed frog).